The chain runs to 382 residues: UDP-N-acetylenolpyruvoylglucosamine reductase (382 aa).

The FAD-binding PCMH-type domain maps to 50–253 (RVGGPAVLAE…REAVLRLRAS (204 aa)). Residue Arg-193 is part of the active site. The active-site Proton donor is Ser-270. Residue Glu-374 is part of the active site.

This sequence belongs to the MurB family. It depends on FAD as a cofactor.

The protein localises to the cytoplasm. It carries out the reaction UDP-N-acetyl-alpha-D-muramate + NADP(+) = UDP-N-acetyl-3-O-(1-carboxyvinyl)-alpha-D-glucosamine + NADPH + H(+). The protein operates within cell wall biogenesis; peptidoglycan biosynthesis. Functionally, cell wall formation. The chain is UDP-N-acetylenolpyruvoylglucosamine reductase from Nocardia farcinica (strain IFM 10152).